The following is a 187-amino-acid chain: Orotate phosphoribosyltransferase (187 aa).

Residues Arg98, Lys99, Lys102, His104, and 128–136 each bind 5-phospho-alpha-D-ribose 1-diphosphate; that span reads EDVTTTGGS. 2 residues coordinate orotate: Thr132 and Arg160.

Belongs to the purine/pyrimidine phosphoribosyltransferase family. PyrE subfamily. As to quaternary structure, homodimer. Mg(2+) is required as a cofactor.

It carries out the reaction orotidine 5'-phosphate + diphosphate = orotate + 5-phospho-alpha-D-ribose 1-diphosphate. Its pathway is pyrimidine metabolism; UMP biosynthesis via de novo pathway; UMP from orotate: step 1/2. Catalyzes the transfer of a ribosyl phosphate group from 5-phosphoribose 1-diphosphate to orotate, leading to the formation of orotidine monophosphate (OMP). This chain is Orotate phosphoribosyltransferase, found in Rhodopseudomonas palustris (strain TIE-1).